A 234-amino-acid polypeptide reads, in one-letter code: Enolase-phosphatase E1 (234 aa).

Asp10 and Glu12 together coordinate Mg(2+). Substrate-binding positions include 125–126 (SS) and Lys162. Mg(2+) is bound at residue Asp188.

The protein belongs to the HAD-like hydrolase superfamily. MasA/MtnC family. In terms of assembly, monomer. Requires Mg(2+) as cofactor.

It is found in the cytoplasm. The protein resides in the nucleus. It carries out the reaction 5-methylsulfanyl-2,3-dioxopentyl phosphate + H2O = 1,2-dihydroxy-5-(methylsulfanyl)pent-1-en-3-one + phosphate. It functions in the pathway amino-acid biosynthesis; L-methionine biosynthesis via salvage pathway; L-methionine from S-methyl-5-thio-alpha-D-ribose 1-phosphate: step 3/6. Its pathway is amino-acid biosynthesis; L-methionine biosynthesis via salvage pathway; L-methionine from S-methyl-5-thio-alpha-D-ribose 1-phosphate: step 4/6. Bifunctional enzyme that catalyzes the enolization of 2,3-diketo-5-methylthiopentyl-1-phosphate (DK-MTP-1-P) into the intermediate 2-hydroxy-3-keto-5-methylthiopentenyl-1-phosphate (HK-MTPenyl-1-P), which is then dephosphorylated to form the acireductone 1,2-dihydroxy-3-keto-5-methylthiopentene (DHK-MTPene). This is Enolase-phosphatase E1 (utr4) from Neurospora crassa (strain ATCC 24698 / 74-OR23-1A / CBS 708.71 / DSM 1257 / FGSC 987).